We begin with the raw amino-acid sequence, 229 residues long: Large ribosomal subunit protein uL1 (229 aa).

This sequence belongs to the universal ribosomal protein uL1 family. In terms of assembly, part of the 50S ribosomal subunit.

Its function is as follows. Binds directly to 23S rRNA. The L1 stalk is quite mobile in the ribosome, and is involved in E site tRNA release. Protein L1 is also a translational repressor protein, it controls the translation of the L11 operon by binding to its mRNA. In Desulforamulus reducens (strain ATCC BAA-1160 / DSM 100696 / MI-1) (Desulfotomaculum reducens), this protein is Large ribosomal subunit protein uL1.